The sequence spans 929 residues: Bifunctional glutamine synthetase adenylyltransferase/adenylyl-removing enzyme (929 aa).

The segment at Met-1 to Arg-423 is adenylyl removase. Residues Ala-433–Thr-929 form an adenylyl transferase region.

It belongs to the GlnE family. Mg(2+) is required as a cofactor.

It catalyses the reaction [glutamine synthetase]-O(4)-(5'-adenylyl)-L-tyrosine + phosphate = [glutamine synthetase]-L-tyrosine + ADP. The catalysed reaction is [glutamine synthetase]-L-tyrosine + ATP = [glutamine synthetase]-O(4)-(5'-adenylyl)-L-tyrosine + diphosphate. Its function is as follows. Involved in the regulation of glutamine synthetase GlnA, a key enzyme in the process to assimilate ammonia. When cellular nitrogen levels are high, the C-terminal adenylyl transferase (AT) inactivates GlnA by covalent transfer of an adenylyl group from ATP to specific tyrosine residue of GlnA, thus reducing its activity. Conversely, when nitrogen levels are low, the N-terminal adenylyl removase (AR) activates GlnA by removing the adenylyl group by phosphorolysis, increasing its activity. The regulatory region of GlnE binds the signal transduction protein PII (GlnB) which indicates the nitrogen status of the cell. The sequence is that of Bifunctional glutamine synthetase adenylyltransferase/adenylyl-removing enzyme from Nitrosomonas europaea (strain ATCC 19718 / CIP 103999 / KCTC 2705 / NBRC 14298).